Here is a 403-residue protein sequence, read N- to C-terminus: Phosphoglycerate kinase (403 aa).

Substrate is bound by residues 24–26 (DLN), R39, 62–65 (HLGR), R121, and R161. Residues K211, G299, E330, and 359 to 362 (GGDS) contribute to the ATP site.

The protein belongs to the phosphoglycerate kinase family. Monomer.

The protein localises to the cytoplasm. The catalysed reaction is (2R)-3-phosphoglycerate + ATP = (2R)-3-phospho-glyceroyl phosphate + ADP. It participates in carbohydrate degradation; glycolysis; pyruvate from D-glyceraldehyde 3-phosphate: step 2/5. This chain is Phosphoglycerate kinase, found in Rhodococcus opacus (strain B4).